Here is a 373-residue protein sequence, read N- to C-terminus: Cytoplasmic tRNA 2-thiolation protein 1 (373 aa).

It belongs to the TtcA family. CTU1/NCS6/ATPBD3 subfamily.

It is found in the cytoplasm. The protein operates within tRNA modification; 5-methoxycarbonylmethyl-2-thiouridine-tRNA biosynthesis. Plays a central role in 2-thiolation of mcm(5)S(2)U at tRNA wobble positions of tRNA(Lys), tRNA(Glu) and tRNA(Gln). Directly binds tRNAs and probably acts by catalyzing adenylation of tRNAs, an intermediate required for 2-thiolation. It is unclear whether it acts as a sulfurtransferase that transfers sulfur from thiocarboxylated URM1 onto the uridine of tRNAs at wobble position. This is Cytoplasmic tRNA 2-thiolation protein 1 from Caenorhabditis elegans.